A 149-amino-acid chain; its full sequence is Transcription antitermination protein NusB (149 aa).

Belongs to the NusB family.

Involved in transcription antitermination. Required for transcription of ribosomal RNA (rRNA) genes. Binds specifically to the boxA antiterminator sequence of the ribosomal RNA (rrn) operons. This is Transcription antitermination protein NusB from Hahella chejuensis (strain KCTC 2396).